We begin with the raw amino-acid sequence, 286 residues long: MQNKIDYKNIKKIGLVTRPNVSLDKEILKLQSILSIYKVELVLLKESSEILDLPKYGLDDLFKISDFVISLGGDGTLISLCRKACEYDKAVLGIHAGHLGFLTDFKVDEAENFFQAFFQGEFRIEKPYLLSVFLEDKQGKILEKLAFNDVVISKNNQASMAHIEVFRKEKKFNEYFGDGLIVATPAGSTAYNLSANGPIVYTLAQAFILTPVCSHSLTQRPIVLPKGFEIEIMAKDCILCIDGQENYKMNDFKSIKVGLSDKNVALIHPKNRDYFQILKEKLHWGN.

Aspartate 74 (proton acceptor) is an active-site residue. NAD(+) is bound by residues 74 to 75 (DG), 148 to 149 (ND), aspartate 178, alanine 186, 189 to 194 (TAYNLS), and glutamine 244.

Belongs to the NAD kinase family. Requires a divalent metal cation as cofactor.

The protein resides in the cytoplasm. It carries out the reaction NAD(+) + ATP = ADP + NADP(+) + H(+). Involved in the regulation of the intracellular balance of NAD and NADP, and is a key enzyme in the biosynthesis of NADP. Catalyzes specifically the phosphorylation on 2'-hydroxyl of the adenosine moiety of NAD to yield NADP. This chain is NAD kinase, found in Campylobacter jejuni (strain RM1221).